The chain runs to 123 residues: Protein LLP homolog (123 aa).

Residues 1-21 (MAKSIRSKWKRKMRAEKRKKN) are compositionally biased toward basic residues. 2 disordered regions span residues 1 to 23 (MAKS…KNAP) and 55 to 123 (KINE…KLAW). Residues 70 to 89 (DSSKMDMELKRNKKNLRDQH) show a composition bias toward basic and acidic residues. Positions 100-123 (QQKKLKSQCGKKKGKSKQAKKLAW) are enriched in basic residues.

The protein belongs to the learning-associated protein family.

It is found in the nucleus. The protein resides in the nucleolus. Its subcellular location is the chromosome. Regulates dendritic and spine growth and synaptic transmission. The polypeptide is Protein LLP homolog (llph) (Xenopus tropicalis (Western clawed frog)).